Here is a 747-residue protein sequence, read N- to C-terminus: DNA repair and recombination protein RAD54-like (747 aa).

The disordered stretch occupies residues 1-42; it reads MRRSLAPSQLARRKPEDRSSDDEDWQPGTVTPKKRKSSSETQ. The tract at residues 2–9 is required for chromatin remodeling, strand pairing activities and coupling of ATPase activity; the sequence is RRSLAPSQ. A Phosphoserine modification is found at Ser38. Residues 170–345 enclose the Helicase ATP-binding domain; sequence SRRIPGSHGC…FSLVHFVNSG (176 aa). 183-190 provides a ligand contact to ATP; that stretch reads DEMGLGKT. A DEGH box motif is present at residues 296–299; sequence DEGH. Residues 500-653 form the Helicase C-terminal domain; that stretch reads VLDYILAVTR…CVVDEEQDVE (154 aa). At Lys515 the chain carries N6-acetyllysine. Phosphoserine; by NEK1 is present on Ser572.

It belongs to the SNF2/RAD54 helicase family. Homohexamer. Interacts (via N-terminus) with RAD51. Interacts with NAP1L1. Interacts with BRD9; this interaction orchestrates RAD51-RAD54 complex formation. In terms of processing, acetylated. Acetylation promotes interaction with BRD9, and subsequently with RAD54, which is essential for homologous recombination (HR). Phosphorylated. Phosphorylation at Ser-572 by NEK1 specifically in G2 phase allows efficient removal of RAD51 filaments from DNA. In terms of tissue distribution, hardly detectable in most tissues. Dramatically increased in thymus, spleen and testis.

It is found in the nucleus. It carries out the reaction ATP + H2O = ADP + phosphate + H(+). In terms of biological role, plays an essential role in homologous recombination (HR) which is a major pathway for repairing DNA double-strand breaks (DSBs), single-stranded DNA (ssDNA) gaps, and stalled or collapsed replication forks. Acts as a molecular motor during the homology search and guides RAD51 ssDNA along a donor dsDNA thereby changing the homology search from the diffusion-based mechanism to a motor-guided mechanism. Plays also an essential role in RAD51-mediated synaptic complex formation which consists of three strands encased in a protein filament formed once homology is recognized. Once DNA strand exchange occured, dissociates RAD51 from nucleoprotein filaments formed on dsDNA. Deficiency also resulted in an increased frequency of end-to-end chromosome fusions involving telomeres compared to the controls, suggesting a putative role in telomere capping. Non-homologous end joining (NHEJ) and homologous recombination (HR) represent the two major pathways of DNA double-strand break (DSB) repair in eukaryotic cells. LIG4 and RAD54L cooperate to support cellular proliferation, repair spontaneous DSBs, and prevent chromosome and single chromatid aberrations. This chain is DNA repair and recombination protein RAD54-like (Rad54l), found in Mus musculus (Mouse).